Reading from the N-terminus, the 304-residue chain is Protein translocase subunit SecF (304 aa).

The next 6 membrane-spanning stretches (helical) occupy residues 20–40, 143–163, 164–184, 195–215, 244–266, and 276–298; these read AKLFFIISGVLIVISLFLIFT, AMMALLYANIGVLIYVAIRFE, LIFAIGAILALVHDVIITLGF, TVVAALLALIGYSLNDTIVVF, LSRTIITSLLTFFTVLSLMIFGG, and LVIGIIVGTYSSIGIASGLVYLI.

This sequence belongs to the SecD/SecF family. SecF subfamily. As to quaternary structure, forms a complex with SecD. Part of the essential Sec protein translocation apparatus which comprises SecA, SecYEG and auxiliary proteins SecDF. Other proteins may also be involved.

The protein localises to the cell inner membrane. Functionally, part of the Sec protein translocase complex. Interacts with the SecYEG preprotein conducting channel. SecDF uses the proton motive force (PMF) to complete protein translocation after the ATP-dependent function of SecA. This is Protein translocase subunit SecF from Calditerrivibrio nitroreducens (strain DSM 19672 / NBRC 101217 / Yu37-1).